Here is a 121-residue protein sequence, read N- to C-terminus: Large ribosomal subunit protein uL14 (121 aa).

This sequence belongs to the universal ribosomal protein uL14 family. In terms of assembly, part of the 50S ribosomal subunit. Forms a cluster with proteins L3 and L19. In the 70S ribosome, L14 and L19 interact and together make contacts with the 16S rRNA in bridges B5 and B8.

Binds to 23S rRNA. Forms part of two intersubunit bridges in the 70S ribosome. This Synechococcus sp. (strain WH7803) protein is Large ribosomal subunit protein uL14.